Here is a 482-residue protein sequence, read N- to C-terminus: Bifunctional protein GlmU (482 aa).

The tract at residues 1–238 (MSAIRPAAVV…HREIAGINNR (238 aa)) is pyrophosphorylase. UDP-N-acetyl-alpha-D-glucosamine-binding positions include 12–15 (LAAG), K26, Q79, and 84–85 (GT). Position 110 (D110) interacts with Mg(2+). The UDP-N-acetyl-alpha-D-glucosamine site is built by G147, E163, N178, and N236. N236 contacts Mg(2+). The tract at residues 239–259 (VQLAEARRILNDRLLTGAMLA) is linker. Positions 260-482 (GVTVVDPATT…AVSREADGED (223 aa)) are N-acetyltransferase. 2 residues coordinate UDP-N-acetyl-alpha-D-glucosamine: R341 and K359. The active-site Proton acceptor is H371. UDP-N-acetyl-alpha-D-glucosamine-binding residues include Y374 and N385. Acetyl-CoA is bound by residues A388, 394 to 395 (NY), S413, A431, and R448. Residues 460–482 (RKRPGSAAAKAAEAVSREADGED) are disordered. Residues 464–473 (GSAAAKAAEA) are compositionally biased toward low complexity.

In the N-terminal section; belongs to the N-acetylglucosamine-1-phosphate uridyltransferase family. The protein in the C-terminal section; belongs to the transferase hexapeptide repeat family. In terms of assembly, homotrimer. Requires Mg(2+) as cofactor.

It is found in the cytoplasm. The catalysed reaction is alpha-D-glucosamine 1-phosphate + acetyl-CoA = N-acetyl-alpha-D-glucosamine 1-phosphate + CoA + H(+). It catalyses the reaction N-acetyl-alpha-D-glucosamine 1-phosphate + UTP + H(+) = UDP-N-acetyl-alpha-D-glucosamine + diphosphate. Its pathway is nucleotide-sugar biosynthesis; UDP-N-acetyl-alpha-D-glucosamine biosynthesis; N-acetyl-alpha-D-glucosamine 1-phosphate from alpha-D-glucosamine 6-phosphate (route II): step 2/2. The protein operates within nucleotide-sugar biosynthesis; UDP-N-acetyl-alpha-D-glucosamine biosynthesis; UDP-N-acetyl-alpha-D-glucosamine from N-acetyl-alpha-D-glucosamine 1-phosphate: step 1/1. It functions in the pathway bacterial outer membrane biogenesis; LPS lipid A biosynthesis. Functionally, catalyzes the last two sequential reactions in the de novo biosynthetic pathway for UDP-N-acetylglucosamine (UDP-GlcNAc). The C-terminal domain catalyzes the transfer of acetyl group from acetyl coenzyme A to glucosamine-1-phosphate (GlcN-1-P) to produce N-acetylglucosamine-1-phosphate (GlcNAc-1-P), which is converted into UDP-GlcNAc by the transfer of uridine 5-monophosphate (from uridine 5-triphosphate), a reaction catalyzed by the N-terminal domain. The protein is Bifunctional protein GlmU of Streptomyces coelicolor (strain ATCC BAA-471 / A3(2) / M145).